The sequence spans 398 residues: 1-deoxy-D-xylulose 5-phosphate reductoisomerase (398 aa).

The NADPH site is built by threonine 11, glycine 12, serine 13, isoleucine 14, arginine 38, asparagine 39, and asparagine 125. Residue lysine 126 participates in 1-deoxy-D-xylulose 5-phosphate binding. NADPH is bound at residue glutamate 127. Residue aspartate 151 coordinates Mn(2+). 4 residues coordinate 1-deoxy-D-xylulose 5-phosphate: serine 152, glutamate 153, serine 179, and histidine 202. Mn(2+) is bound at residue glutamate 153. An NADPH-binding site is contributed by glycine 208. 1-deoxy-D-xylulose 5-phosphate contacts are provided by serine 215, asparagine 220, lysine 221, and glutamate 224. Glutamate 224 lines the Mn(2+) pocket.

The protein belongs to the DXR family. It depends on Mg(2+) as a cofactor. Mn(2+) serves as cofactor.

The enzyme catalyses 2-C-methyl-D-erythritol 4-phosphate + NADP(+) = 1-deoxy-D-xylulose 5-phosphate + NADPH + H(+). It functions in the pathway isoprenoid biosynthesis; isopentenyl diphosphate biosynthesis via DXP pathway; isopentenyl diphosphate from 1-deoxy-D-xylulose 5-phosphate: step 1/6. In terms of biological role, catalyzes the NADPH-dependent rearrangement and reduction of 1-deoxy-D-xylulose-5-phosphate (DXP) to 2-C-methyl-D-erythritol 4-phosphate (MEP). This Burkholderia vietnamiensis (strain G4 / LMG 22486) (Burkholderia cepacia (strain R1808)) protein is 1-deoxy-D-xylulose 5-phosphate reductoisomerase.